The primary structure comprises 317 residues: Melanocyte-stimulating hormone receptor (317 aa).

Residues 1–37 lie on the Extracellular side of the membrane; sequence MPVQGSQRRLLGSLNSTPTATPHLGLAANQTGARCLE. N-linked (GlcNAc...) asparagine glycosylation occurs at asparagine 29. The chain crosses the membrane as a helical span at residues 38–63; it reads VSVPDGLFLSLGLVSLVENVLVVTAI. Topologically, residues 64 to 72 are cytoplasmic; sequence AKNRNLHSP. Residues 73 to 93 form a helical membrane-spanning segment; that stretch reads MYCFICCLALSDLLVSGSNML. Residues 94–118 are Extracellular-facing; the sequence is ETAVTLLLEAGALAARAAVVQQLDN. Residues 119 to 140 traverse the membrane as a helical segment; the sequence is VIDVITCSSMLSSLCFLGAIAV. The Cytoplasmic portion of the chain corresponds to 141–163; the sequence is DRYISIFYALRYHSIVTLPRARR. A helical transmembrane segment spans residues 164-183; it reads AVAAIWVASVLCSTLFIAYY. The Extracellular segment spans residues 184–191; it reads DHAAVLLC. A helical transmembrane segment spans residues 192 to 211; the sequence is LVVFFLAMLVLMAVLYVHML. At 212-240 the chain is on the cytoplasmic side; that stretch reads ARACQHAQGIARLHKRQRLAHQGFGLKGA. The chain crosses the membrane as a helical span at residues 241–266; that stretch reads ATLTILLGIFFLCWGPFFLHLTLIVL. Over 267-279 the chain is Extracellular; it reads CPQHPTCSCIFKN. A helical membrane pass occupies residues 280 to 300; that stretch reads FNLFLALIICNAIIDPLIYAF. At 301–317 the chain is on the cytoplasmic side; the sequence is RSQELRRTLKEVLLCSW. The S-palmitoyl cysteine moiety is linked to residue cysteine 315.

This sequence belongs to the G-protein coupled receptor 1 family. As to quaternary structure, interacts with MGRN1, but does not undergo MGRN1-mediated ubiquitination; this interaction competes with GNAS-binding and thus inhibits agonist-induced cAMP production. Interacts with OPN3; the interaction results in a decrease in MC1R-mediated cAMP signaling and ultimately a decrease in melanin production in melanocytes.

Its subcellular location is the cell membrane. Its function is as follows. Receptor for MSH (alpha, beta and gamma) and ACTH. The activity of this receptor is mediated by G proteins which activate adenylate cyclase. Mediates melanogenesis, the production of eumelanin (black/brown) and phaeomelanin (red/yellow), via regulation of cAMP signaling in melanocytes. The chain is Melanocyte-stimulating hormone receptor (MC1R) from Macaca sylvanus (Barbary macaque).